Here is a 158-residue protein sequence, read N- to C-terminus: Crossover junction endodeoxyribonuclease RuvC (158 aa).

Active-site residues include aspartate 7, glutamate 66, and aspartate 139. Mg(2+) is bound by residues aspartate 7, glutamate 66, and aspartate 139.

It belongs to the RuvC family. As to quaternary structure, homodimer which binds Holliday junction (HJ) DNA. The HJ becomes 2-fold symmetrical on binding to RuvC with unstacked arms; it has a different conformation from HJ DNA in complex with RuvA. In the full resolvosome a probable DNA-RuvA(4)-RuvB(12)-RuvC(2) complex forms which resolves the HJ. Requires Mg(2+) as cofactor.

The protein localises to the cytoplasm. It catalyses the reaction Endonucleolytic cleavage at a junction such as a reciprocal single-stranded crossover between two homologous DNA duplexes (Holliday junction).. Functionally, the RuvA-RuvB-RuvC complex processes Holliday junction (HJ) DNA during genetic recombination and DNA repair. Endonuclease that resolves HJ intermediates. Cleaves cruciform DNA by making single-stranded nicks across the HJ at symmetrical positions within the homologous arms, yielding a 5'-phosphate and a 3'-hydroxyl group; requires a central core of homology in the junction. The consensus cleavage sequence is 5'-(A/T)TT(C/G)-3'. Cleavage occurs on the 3'-side of the TT dinucleotide at the point of strand exchange. HJ branch migration catalyzed by RuvA-RuvB allows RuvC to scan DNA until it finds its consensus sequence, where it cleaves and resolves the cruciform DNA. The polypeptide is Crossover junction endodeoxyribonuclease RuvC (Campylobacter hominis (strain ATCC BAA-381 / DSM 21671 / CCUG 45161 / LMG 19568 / NCTC 13146 / CH001A)).